The sequence spans 392 residues: 2,3-bisphosphoglycerate-independent phosphoglycerate mutase (392 aa).

Belongs to the BPG-independent phosphoglycerate mutase family. A-PGAM subfamily.

The catalysed reaction is (2R)-2-phosphoglycerate = (2R)-3-phosphoglycerate. It participates in carbohydrate degradation; glycolysis; pyruvate from D-glyceraldehyde 3-phosphate: step 3/5. Functionally, catalyzes the interconversion of 2-phosphoglycerate and 3-phosphoglycerate. The protein is 2,3-bisphosphoglycerate-independent phosphoglycerate mutase of Methanothrix thermoacetophila (strain DSM 6194 / JCM 14653 / NBRC 101360 / PT) (Methanosaeta thermophila).